The chain runs to 607 residues: UvrABC system protein C (607 aa).

Residues 16 to 94 form the GIY-YIG domain; it reads GRPGVYRMFD…IKEWRPPYNI (79 aa). The 36-residue stretch at 203–238 folds into the UVR domain; the sequence is NALSEELSASMEKASMALEFERAAELRDQISMLRRV.

It belongs to the UvrC family. As to quaternary structure, interacts with UvrB in an incision complex.

The protein localises to the cytoplasm. The UvrABC repair system catalyzes the recognition and processing of DNA lesions. UvrC both incises the 5' and 3' sides of the lesion. The N-terminal half is responsible for the 3' incision and the C-terminal half is responsible for the 5' incision. This is UvrABC system protein C from Ectopseudomonas mendocina (strain ymp) (Pseudomonas mendocina).